A 510-amino-acid polypeptide reads, in one-letter code: Probable lipid II flippase MurJ (510 aa).

The next 12 helical transmembrane spans lie at 13-33 (DVVI…LFAN), 81-101 (GLVS…AALF), 130-150 (FPYL…NTIG), 154-174 (VMSF…LFLA), 182-202 (LALA…QIPF), 240-260 (INLL…ISWL), 266-286 (LLEF…LPTL), 315-335 (IFLL…PMLL), 357-377 (AFNA…GYYA), 396-416 (MGFN…ASAM), 443-463 (VFFV…WYYV), and 481-501 (LVWL…LLGV).

This sequence belongs to the MurJ/MviN family.

It localises to the cell inner membrane. The protein operates within cell wall biogenesis; peptidoglycan biosynthesis. Its function is as follows. Involved in peptidoglycan biosynthesis. Transports lipid-linked peptidoglycan precursors from the inner to the outer leaflet of the cytoplasmic membrane. The chain is Probable lipid II flippase MurJ from Haemophilus influenzae (strain ATCC 51907 / DSM 11121 / KW20 / Rd).